Reading from the N-terminus, the 111-residue chain is Ribosome-binding factor A (111 aa).

The protein belongs to the RbfA family. In terms of assembly, monomer. Binds 30S ribosomal subunits, but not 50S ribosomal subunits or 70S ribosomes.

It localises to the cytoplasm. Its function is as follows. One of several proteins that assist in the late maturation steps of the functional core of the 30S ribosomal subunit. Associates with free 30S ribosomal subunits (but not with 30S subunits that are part of 70S ribosomes or polysomes). Required for efficient processing of 16S rRNA. May interact with the 5'-terminal helix region of 16S rRNA. This is Ribosome-binding factor A from Helicobacter pylori (strain J99 / ATCC 700824) (Campylobacter pylori J99).